The primary structure comprises 434 residues: 3-phosphoshikimate 1-carboxyvinyltransferase (434 aa).

The 3-phosphoshikimate site is built by K15, S16, and R20. K15 lines the phosphoenolpyruvate pocket. Positions 96 and 124 each coordinate phosphoenolpyruvate. Residues S169, Q171, S195, D319, and K346 each coordinate 3-phosphoshikimate. Q171 lines the phosphoenolpyruvate pocket. The active-site Proton acceptor is D319. Positions 350 and 394 each coordinate phosphoenolpyruvate.

This sequence belongs to the EPSP synthase family. Monomer.

It is found in the cytoplasm. It carries out the reaction 3-phosphoshikimate + phosphoenolpyruvate = 5-O-(1-carboxyvinyl)-3-phosphoshikimate + phosphate. Its pathway is metabolic intermediate biosynthesis; chorismate biosynthesis; chorismate from D-erythrose 4-phosphate and phosphoenolpyruvate: step 6/7. Catalyzes the transfer of the enolpyruvyl moiety of phosphoenolpyruvate (PEP) to the 5-hydroxyl of shikimate-3-phosphate (S3P) to produce enolpyruvyl shikimate-3-phosphate and inorganic phosphate. This is 3-phosphoshikimate 1-carboxyvinyltransferase from Chlorobaculum parvum (strain DSM 263 / NCIMB 8327) (Chlorobium vibrioforme subsp. thiosulfatophilum).